Consider the following 197-residue polypeptide: Segregation and condensation protein B (197 aa).

This sequence belongs to the ScpB family. Homodimer. Homodimerization may be required to stabilize the binding of ScpA to the Smc head domains. Component of a cohesin-like complex composed of ScpA, ScpB and the Smc homodimer, in which ScpA and ScpB bind to the head domain of Smc. The presence of the three proteins is required for the association of the complex with DNA.

The protein localises to the cytoplasm. Participates in chromosomal partition during cell division. May act via the formation of a condensin-like complex containing Smc and ScpA that pull DNA away from mid-cell into both cell halves. The polypeptide is Segregation and condensation protein B (Bacillus licheniformis (strain ATCC 14580 / DSM 13 / JCM 2505 / CCUG 7422 / NBRC 12200 / NCIMB 9375 / NCTC 10341 / NRRL NRS-1264 / Gibson 46)).